We begin with the raw amino-acid sequence, 358 residues long: Snurportin-1 (358 aa).

An N-acetylmethionine modification is found at Met-1. 2 disordered regions span residues 1–26 (MEELSQALASSFSVSQELNSTAAPHP) and 69–90 (DWTGMESGEEENKKDEEEMDID). The interval 1–65 (MEELSQALAS…LDYVNHARRL (65 aa)) is necessary for interaction with KPNB1 and m3G-cap U1 and U5 snRNP import receptor activity. The segment at 1–160 (MEELSQALAS…NRFSSLLPGG (160 aa)) is necessary for interaction with XPO1. A compositionally biased stretch (polar residues) spans 7–22 (ALASSFSVSQELNSTA). One can recognise an IBB domain in the interval 11 to 73 (SFSVSQELNS…RLAEDDWTGM (63 aa)). The residue at position 75 (Ser-75) is a Phosphoserine. An interaction with m3G-cap structure region spans residues 128 to 130 (GKR). The tract at residues 210–329 (MHSKLPEEEG…DTKEKLTHKA (120 aa)) is necessary for binding to the m3G-cap structure. Residues 315-341 (KRSQEDTKEKLTHKASENGHYELEHLS) show a composition bias toward basic and acidic residues. Positions 315 to 358 (KRSQEDTKEKLTHKASENGHYELEHLSTPKLRNPPHSSESLMDN) are disordered. Over residues 349 to 358 (PHSSESLMDN) the composition is skewed to polar residues. Ser-351 bears the Phosphoserine mark.

The protein belongs to the snurportin family. In terms of assembly, component of an import snRNP complex composed of KPNB1, SNUPN, SMN1 and ZNF259. Component of a nuclear export receptor complex composed of KPNB1, Ran, SNUPN and XPO1. Found in a trimeric export complex with SNUPN, Ran and XPO1. Interacts (via IBB domain) with KPNB1; the interaction is direct. Interacts with DDX20, IPO7, SMN1, SNRPB and XPO1. Interacts directly with XPO1. Its interaction with XPO1 and binding to m3G-cap U snRNPs appears to be mutually exclusive. Can form homomers.

Its subcellular location is the nucleus. It localises to the cytoplasm. Functions as an U snRNP-specific nuclear import adapter. Involved in the trimethylguanosine (m3G)-cap-dependent nuclear import of U snRNPs. Binds specifically to the terminal m3G-cap U snRNAs. The protein is Snurportin-1 (Snupn) of Mus musculus (Mouse).